The chain runs to 261 residues: MPQNEYIEQHIKKHGRRLDYEERKRKKEAREGHRVAKDAQTLKGWRAKQFAKKRYAEKVAMKKKIKAHQESKVKGPSTPKAEDGEALPTYLLDRQTNNTAKAISSSIKQKRLEKADKFQVPLPKVKGISEEEMFKVIKTGKSKSKSWKRMITKHTFVGEGFTRRPVKMERIIRPAALRQKKANVTHPELGVTVFLPILGVKKNPQSPMYTQLGVLTKGTIIEVNVSELGLVTAGGKVVWGKYAQITNEPDRDGCVNAVLLV.

Residues 1-38 (MPQNEYIEQHIKKHGRRLDYEERKRKKEAREGHRVAKD) are disordered. 2 short sequence motifs (nuclear localization signal) span residues 11–18 (IKKHGRRL) and 51–58 (AKKRYAEK). The segment covering 17–37 (RLDYEERKRKKEAREGHRVAK) has biased composition (basic and acidic residues). The tract at residues 59-85 (VAMKKKIKAHQESKVKGPSTPKAEDGE) is disordered.

This sequence belongs to the eukaryotic ribosomal protein eS8 family. Ribosome biogenesis protein NSA2 subfamily. In terms of assembly, component of the pre-66S ribosomal particle. Interacts with NOP7 and RRP1. Interacts with RSA4 (via WD repeats).

It localises to the nucleus. It is found in the nucleolus. Its function is as follows. Involved in the biogenesis of the 60S ribosomal subunit. May play a part in the quality control of pre-60S particles. The protein is Ribosome biogenesis protein C3_06160C_A of Candida albicans (strain SC5314 / ATCC MYA-2876) (Yeast).